Reading from the N-terminus, the 235-residue chain is Maximins-S type A (235 aa).

The signal sequence occupies residues 1–18; sequence MNFNYFILVLFFITSGHA. 2 consecutive propeptides follow at residues 19–35 and 52–65; these read KSET…HIKR and SAEE…LVKR. Residue Asn83 is modified to Asparagine amide. A propeptide spanning residues 87–100 is cleaved from the precursor; it reads SAEEQDLAEDLVTR. Asn118 is subject to Asparagine amide. A propeptide spanning residues 122–135 is cleaved from the precursor; it reads SAEEQDLAEDLVKR. Asparagine amide is present on Asn153. Positions 157–170 are excised as a propeptide; sequence SAEEQDLAEDLVTR. Lys188 is subject to Lysine amide. Residues 192–205 constitute a propeptide that is removed on maturation; sequence SAEDQDLAEDLVTR. The residue at position 223 (Lys223) is a Lysine amide. The propeptide occupies 227-235; sequence SAEQEKDMK.

Belongs to the maximin-S family. As to expression, expressed by the skin dorsal glands.

The protein resides in the secreted. Maximin-S1 has no antimicrobial activity. Has no hemolytic activity. In terms of biological role, maximin-S2 has an activity against mycoplasma but has no activity against common Gram-positive and Gram-negative bacteria nor fungi. Has no hemolytic activity. Its function is as follows. Maximin-S3 has an activity against mycoplasma but has no activity against common Gram-positive and Gram-negative bacteria nor fungi. Has no hemolytic activity. Functionally, maximin-S4 has an activity against mycoplasma but has no activity against common Gram-positive and Gram-negative bacteria nor fungi. Has no hemolytic activity. Maximin-S5 has an activity against mycoplasma but has no activity against common Gram-positive and Gram-negative bacteria nor fungi. Has no hemolytic activity. This chain is Maximins-S type A, found in Bombina maxima (Giant fire-bellied toad).